A 417-amino-acid chain; its full sequence is D-amino acid dehydrogenase (417 aa).

An FAD-binding site is contributed by 3–17 (VVILGSGVVGVSTAW).

Belongs to the DadA oxidoreductase family. The cofactor is FAD.

It carries out the reaction a D-alpha-amino acid + A + H2O = a 2-oxocarboxylate + AH2 + NH4(+). It participates in amino-acid degradation; D-alanine degradation; NH(3) and pyruvate from D-alanine: step 1/1. Functionally, oxidative deamination of D-amino acids. This Pectobacterium carotovorum subsp. carotovorum (strain PC1) protein is D-amino acid dehydrogenase.